Here is a 246-residue protein sequence, read N- to C-terminus: CD99 antigen-like protein 2 (246 aa).

The signal sequence occupies residues 1-25; it reads MVARLTTLLVCLVFSLATLVQRGYG. The Extracellular segment spans residues 26-160; sequence DFDDFNLEDA…PGSGAVTDPG (135 aa). The interval 43 to 156 is disordered; that stretch reads KQSHFSTTTR…SQDDPGSGAV (114 aa). 2 stretches are compositionally biased toward low complexity: residues 49–58 and 71–81; these read TTTRRTGTTR and TTTTTKRPGTT. Over residues 100–109 the composition is skewed to basic and acidic residues; sequence DDRNDLDGPK. An O-linked (Xyl...) (chondroitin sulfate) serine glycan is attached at Ser153. The chain crosses the membrane as a helical span at residues 161-181; it reads TIAGLVSALAAALLGAVSGYL. Residues 182 to 246 lie on the Cytoplasmic side of the membrane; that stretch reads SYQHRKFCFS…EPLAPERPRI (65 aa). Residues 223–246 are disordered; the sequence is APPVTDSTQHSQPTEPLAPERPRI. The segment covering 227 to 236 has biased composition (polar residues); the sequence is TDSTQHSQPT.

Belongs to the CD99 family. Post-translationally, O-glycosylated. As to expression, expressed predominantly in the ventral medullary surface of the brain, moderate expression in the cerebral cortex and cerebellum. Low expression in lung and kidney. No expression in heart, stomach, intestine and skeletal muscle.

The protein localises to the cell membrane. The protein resides in the cell junction. It is found in the secreted. Functionally, plays a role in a late step of leukocyte extravasation helping cells to overcome the endothelial basement membrane. Acts at the same site as, but independently of, PECAM1. Homophilic adhesion molecule, but these interactions may not be required for cell aggregation. The sequence is that of CD99 antigen-like protein 2 (Cd99l2) from Rattus norvegicus (Rat).